Reading from the N-terminus, the 664-residue chain is Lamin tail domain-containing protein 2 (664 aa).

Residues 1–40 are disordered; it reads MAPKSCQESEDKQVSPAPAGVQPDSSDLGSPVGTPVDRVA. Residues 118–169 adopt a coiled-coil conformation; the sequence is QDKFLRNQVQKLTLELKAQKEQAQQEKQQLEEKLQQNLWAKQQLEAELQTFQ. A compositionally biased stretch (polar residues) spans 245 to 260; it reads SDQKQSQPPTSETYTL. Disordered regions lie at residues 245 to 272 and 286 to 329; these read SDQK…TEKP and TSSS…MQEH. A compositionally biased stretch (low complexity) spans 286 to 298; sequence TSSSERTQSDTSS. Residues 312-325 are compositionally biased toward polar residues; it reads GHPSQGTNLASSEQ. In terms of domain architecture, LTD spans 362-481; sequence PYTRPQLNPF…QVLSEHQATP (120 aa). The disordered stretch occupies residues 504-563; the sequence is SESEPDVHPGEQQCRPSSPQKGRAKDAGARRKKPGPGVRQHRHSSTSGLRASRTLHPTET. Positions 533–547 are enriched in basic residues; it reads RRKKPGPGVRQHRHS.

The chain is Lamin tail domain-containing protein 2 (Lmntd2) from Mus musculus (Mouse).